Reading from the N-terminus, the 401-residue chain is Imidazolonepropionase (401 aa).

His66 and His68 together coordinate Fe(3+). Residues His66 and His68 each coordinate Zn(2+). Arg75, Tyr138, and His171 together coordinate 4-imidazolone-5-propanoate. N-formimidoyl-L-glutamate is bound at residue Tyr138. His236 is a Fe(3+) binding site. His236 serves as a coordination point for Zn(2+). Residue Gln239 coordinates 4-imidazolone-5-propanoate. Asp311 is a Fe(3+) binding site. Zn(2+) is bound at residue Asp311. Residues Asn313 and Gly315 each coordinate N-formimidoyl-L-glutamate. Residue Thr316 participates in 4-imidazolone-5-propanoate binding.

This sequence belongs to the metallo-dependent hydrolases superfamily. HutI family. Requires Zn(2+) as cofactor. The cofactor is Fe(3+).

It localises to the cytoplasm. It catalyses the reaction 4-imidazolone-5-propanoate + H2O = N-formimidoyl-L-glutamate. It participates in amino-acid degradation; L-histidine degradation into L-glutamate; N-formimidoyl-L-glutamate from L-histidine: step 3/3. In terms of biological role, catalyzes the hydrolytic cleavage of the carbon-nitrogen bond in imidazolone-5-propanoate to yield N-formimidoyl-L-glutamate. It is the third step in the universal histidine degradation pathway. In Pseudomonas putida (strain GB-1), this protein is Imidazolonepropionase.